The sequence spans 275 residues: Formamidopyrimidine-DNA glycosylase (275 aa).

Proline 2 acts as the Schiff-base intermediate with DNA in catalysis. The Proton donor role is filled by glutamate 3. The active-site Proton donor; for beta-elimination activity is the lysine 59. 3 residues coordinate DNA: histidine 92, arginine 111, and lysine 155. The FPG-type zinc-finger motif lies at 240–274; that stretch reads YVYGQTGEPCRRCGHEIEKMKLGGRGTHYCPHCQQ. Catalysis depends on arginine 264, which acts as the Proton donor; for delta-elimination activity.

This sequence belongs to the FPG family. In terms of assembly, monomer. The cofactor is Zn(2+).

The enzyme catalyses Hydrolysis of DNA containing ring-opened 7-methylguanine residues, releasing 2,6-diamino-4-hydroxy-5-(N-methyl)formamidopyrimidine.. It carries out the reaction 2'-deoxyribonucleotide-(2'-deoxyribose 5'-phosphate)-2'-deoxyribonucleotide-DNA = a 3'-end 2'-deoxyribonucleotide-(2,3-dehydro-2,3-deoxyribose 5'-phosphate)-DNA + a 5'-end 5'-phospho-2'-deoxyribonucleoside-DNA + H(+). In terms of biological role, involved in base excision repair of DNA damaged by oxidation or by mutagenic agents. Acts as a DNA glycosylase that recognizes and removes damaged bases. Has a preference for oxidized purines, such as 7,8-dihydro-8-oxoguanine (8-oxoG). Has AP (apurinic/apyrimidinic) lyase activity and introduces nicks in the DNA strand. Cleaves the DNA backbone by beta-delta elimination to generate a single-strand break at the site of the removed base with both 3'- and 5'-phosphates. This chain is Formamidopyrimidine-DNA glycosylase, found in Exiguobacterium sp. (strain ATCC BAA-1283 / AT1b).